The chain runs to 213 residues: Large ribosomal subunit protein bL25 (213 aa).

The segment covering 191–207 has biased composition (low complexity); that stretch reads AEPTDAPTAPAAAPGAE. Residues 191–213 are disordered; it reads AEPTDAPTAPAAAPGAEAPKDKA.

Belongs to the bacterial ribosomal protein bL25 family. CTC subfamily. Part of the 50S ribosomal subunit; part of the 5S rRNA/L5/L18/L25 subcomplex. Contacts the 5S rRNA. Binds to the 5S rRNA independently of L5 and L18.

Its function is as follows. This is one of the proteins that binds to the 5S RNA in the ribosome where it forms part of the central protuberance. The protein is Large ribosomal subunit protein bL25 of Polynucleobacter asymbioticus (strain DSM 18221 / CIP 109841 / QLW-P1DMWA-1) (Polynucleobacter necessarius subsp. asymbioticus).